A 225-amino-acid chain; its full sequence is Octanoyltransferase (225 aa).

The BPL/LPL catalytic domain occupies 42-219 (KNRQASMIFC…SICSALEYIN (178 aa)). Substrate-binding positions include 79 to 86 (RGGKITWH), 149 to 151 (AIG), and 162 to 164 (GFA). The active-site Acyl-thioester intermediate is the C180.

The protein belongs to the LipB family.

The protein localises to the cytoplasm. The catalysed reaction is octanoyl-[ACP] + L-lysyl-[protein] = N(6)-octanoyl-L-lysyl-[protein] + holo-[ACP] + H(+). It functions in the pathway protein modification; protein lipoylation via endogenous pathway; protein N(6)-(lipoyl)lysine from octanoyl-[acyl-carrier-protein]: step 1/2. Its function is as follows. Catalyzes the transfer of endogenously produced octanoic acid from octanoyl-acyl-carrier-protein onto the lipoyl domains of lipoate-dependent enzymes. Lipoyl-ACP can also act as a substrate although octanoyl-ACP is likely to be the physiological substrate. This is Octanoyltransferase from Tropheryma whipplei (strain TW08/27) (Whipple's bacillus).